Consider the following 379-residue polypeptide: Early boundary activity protein 3 (379 aa).

In terms of assembly, the heterotrimeric Elba complex consists of Elba1, Elba2 and Elba3.

It is found in the nucleus. The heterotrimeric Elba complex is required for chromatin domain boundary function during early embryogenesis. It binds to a 8-bp sequence 5'-CCAATAAG-3' in the Fab-7 insulator or boundary element in the bithorax complex and contributes to its insulator or boundary activity. Elba3 lacks DNA-binding activity and plays the role of an adapter protein, bringing Elba1 and 2 together, thereby establishing a complex that recognizes the asymmetric sequence motif through the BEN domains of Elba1 and 2. The polypeptide is Early boundary activity protein 3 (Drosophila melanogaster (Fruit fly)).